The primary structure comprises 345 residues: Anthranilate phosphoribosyltransferase (345 aa).

5-phospho-alpha-D-ribose 1-diphosphate-binding positions include glycine 79, 82–83 (GD), threonine 87, 89–92 (NVST), 106–114 (KHGNRAVSG), and serine 118. Residue glycine 79 coordinates anthranilate. Serine 91 serves as a coordination point for Mg(2+). Asparagine 109 provides a ligand contact to anthranilate. Residue arginine 164 participates in anthranilate binding. Mg(2+) is bound by residues aspartate 223 and glutamate 224.

It belongs to the anthranilate phosphoribosyltransferase family. In terms of assembly, homodimer. Mg(2+) serves as cofactor.

It carries out the reaction N-(5-phospho-beta-D-ribosyl)anthranilate + diphosphate = 5-phospho-alpha-D-ribose 1-diphosphate + anthranilate. It functions in the pathway amino-acid biosynthesis; L-tryptophan biosynthesis; L-tryptophan from chorismate: step 2/5. In terms of biological role, catalyzes the transfer of the phosphoribosyl group of 5-phosphorylribose-1-pyrophosphate (PRPP) to anthranilate to yield N-(5'-phosphoribosyl)-anthranilate (PRA). The sequence is that of Anthranilate phosphoribosyltransferase from Saccharolobus islandicus (strain M.14.25 / Kamchatka #1) (Sulfolobus islandicus).